The following is a 101-amino-acid chain: NAD(P)H-quinone oxidoreductase subunit 4L, chloroplastic (101 aa).

A run of 3 helical transmembrane segments spans residues 2 to 22 (MLEH…YGLI), 32 to 52 (MCLE…SDLF), and 61 to 81 (IFSI…PAIV).

It belongs to the complex I subunit 4L family. In terms of assembly, NDH is composed of at least 16 different subunits, 5 of which are encoded in the nucleus.

It localises to the plastid. The protein resides in the chloroplast thylakoid membrane. The enzyme catalyses a plastoquinone + NADH + (n+1) H(+)(in) = a plastoquinol + NAD(+) + n H(+)(out). It catalyses the reaction a plastoquinone + NADPH + (n+1) H(+)(in) = a plastoquinol + NADP(+) + n H(+)(out). NDH shuttles electrons from NAD(P)H:plastoquinone, via FMN and iron-sulfur (Fe-S) centers, to quinones in the photosynthetic chain and possibly in a chloroplast respiratory chain. The immediate electron acceptor for the enzyme in this species is believed to be plastoquinone. Couples the redox reaction to proton translocation, and thus conserves the redox energy in a proton gradient. This Illicium oligandrum (Star anise) protein is NAD(P)H-quinone oxidoreductase subunit 4L, chloroplastic.